We begin with the raw amino-acid sequence, 64 residues long: MKASELRDKDVAGLNQELSELLKAQFGLRMQKATQQLQNTSQLKKVRRDIARVRTVLGQKGNQK.

It belongs to the universal ribosomal protein uL29 family.

The protein is Large ribosomal subunit protein uL29 of Ralstonia pickettii (strain 12J).